The chain runs to 569 residues: Formate--tetrahydrofolate ligase (569 aa).

Thr-64–Thr-71 is a binding site for ATP.

It belongs to the formate--tetrahydrofolate ligase family.

The catalysed reaction is (6S)-5,6,7,8-tetrahydrofolate + formate + ATP = (6R)-10-formyltetrahydrofolate + ADP + phosphate. It functions in the pathway one-carbon metabolism; tetrahydrofolate interconversion. The protein is Formate--tetrahydrofolate ligase of Shewanella sp. (strain MR-7).